The chain runs to 253 residues: 3-deoxy-manno-octulosonate cytidylyltransferase (253 aa).

It belongs to the KdsB family.

It is found in the cytoplasm. It carries out the reaction 3-deoxy-alpha-D-manno-oct-2-ulosonate + CTP = CMP-3-deoxy-beta-D-manno-octulosonate + diphosphate. The protein operates within nucleotide-sugar biosynthesis; CMP-3-deoxy-D-manno-octulosonate biosynthesis; CMP-3-deoxy-D-manno-octulosonate from 3-deoxy-D-manno-octulosonate and CTP: step 1/1. Its pathway is bacterial outer membrane biogenesis; lipopolysaccharide biosynthesis. Its function is as follows. Activates KDO (a required 8-carbon sugar) for incorporation into bacterial lipopolysaccharide in Gram-negative bacteria. The polypeptide is 3-deoxy-manno-octulosonate cytidylyltransferase (Neisseria meningitidis serogroup A / serotype 4A (strain DSM 15465 / Z2491)).